We begin with the raw amino-acid sequence, 275 residues long: Seminase (275 aa).

Positions 1–19 (MKRLLFLFLLAGILINNHA) are cleaved as a signal peptide. Residue Asn-23 is glycosylated (N-linked (GlcNAc...) asparagine). The Peptidase S1 domain maps to 44–268 (VIGGRVTTNA…VKPFIVKGIK (225 aa)). Residues Cys-70 and Cys-86 are joined by a disulfide bond. Residues His-85 and Asp-131 each act as charge relay system in the active site. 2 disulfide bridges follow: Cys-194–Cys-210 and Cys-220–Cys-244. Residue Ser-224 is the Charge relay system of the active site.

The protein belongs to the peptidase S1 family. In terms of processing, undergoes cleavage in the male during mating with a cleaved product detected in the ejaculatory duct and/or bulb of males by 8-10 minutes after the start of mating. Further cleavage occurs in the mated female. Produced in the male accessory glands and secreted into seminal fluid.

Its subcellular location is the secreted. Seminal fluid protease which is required for cleavage and probably also activation of the metalloprotease Semp1. Also required for a number of female post-mating responses independent of Semp1 including egg laying and sperm usage. This is Seminase from Drosophila melanogaster (Fruit fly).